A 149-amino-acid chain; its full sequence is Envelope glycoprotein UL4 (149 aa).

An N-terminal signal peptide occupies residues 1-18 (MMLRTWISLPMVLLDAYC). N-linked (GlcNAc...) asparagine; by host glycosylation is found at Asn46, Asn51, Asn59, Asn67, Asn105, Asn109, Asn119, Asn136, and Asn145.

Belongs to the RL11 family. In terms of processing, N-glycosylated and possibly O-glycosylated.

Its subcellular location is the virion membrane. The chain is Envelope glycoprotein UL4 (UL4) from Human cytomegalovirus (strain Merlin) (HHV-5).